The primary structure comprises 481 residues: Glutamate--cysteine ligase (481 aa).

Belongs to the glutamate--cysteine ligase type 1 family. Type 1 subfamily.

It carries out the reaction L-cysteine + L-glutamate + ATP = gamma-L-glutamyl-L-cysteine + ADP + phosphate + H(+). It participates in sulfur metabolism; glutathione biosynthesis; glutathione from L-cysteine and L-glutamate: step 1/2. This is Glutamate--cysteine ligase from Clostridium acetobutylicum (strain ATCC 824 / DSM 792 / JCM 1419 / IAM 19013 / LMG 5710 / NBRC 13948 / NRRL B-527 / VKM B-1787 / 2291 / W).